The primary structure comprises 229 residues: Uracil-DNA glycosylase (229 aa).

Residue Asp-64 is the Proton acceptor of the active site.

It belongs to the uracil-DNA glycosylase (UDG) superfamily. UNG family.

The protein resides in the cytoplasm. It carries out the reaction Hydrolyzes single-stranded DNA or mismatched double-stranded DNA and polynucleotides, releasing free uracil.. Its function is as follows. Excises uracil residues from the DNA which can arise as a result of misincorporation of dUMP residues by DNA polymerase or due to deamination of cytosine. In Salmonella arizonae (strain ATCC BAA-731 / CDC346-86 / RSK2980), this protein is Uracil-DNA glycosylase.